Consider the following 168-residue polypeptide: Plastocyanin A, chloroplastic (168 aa).

Residues 1–69 (MATVTSAAVS…SAMIASNAMA (69 aa)) constitute a chloroplast transit peptide. Residues 70–168 (IDVLLGADDG…AGMVGKVTVN (99 aa)) form the Plastocyanin-like domain. Positions 106, 153, 156, and 161 each coordinate Cu cation.

The protein belongs to the plastocyanin family. It depends on Cu(2+) as a cofactor.

Its subcellular location is the plastid. It is found in the chloroplast thylakoid membrane. Functionally, participates in electron transfer between P700 and the cytochrome b6-f complex in photosystem I. The polypeptide is Plastocyanin A, chloroplastic (PETE) (Populus nigra (Lombardy poplar)).